Consider the following 729-residue polypeptide: MAKITKEIVFGNHKLILETGEVARQADGAVMASMNGTQVLVTVVWKKDSGESNDFFPLTVNYQEKFYAIGKIPGGFNKREGRPSDNETLISRLIDRPIRPLFPDNFFNEVQIIATVLSLNPEVSPDIIAMIGASAALSISGVPFNGPIGAARVGYKDGVYLLNPSRKEQEESKLDLVIAGTKDAILMVESEAQELSEDIMRGAMLYGHEMMKSVIKSIEELAREVGKSKPEWKAPEIDTVLKARINDVARNEVEAAYLIKDKQQRYQRLDELREQTISALLAENDELNADVIANMFGELERSIVRNRILDGEPRIDGRDHRTVRPISIRTKFLERTHGSCLFTRGETQAIVVATLGNERDAQILDGISGETRDRFMLHYNFPPYSVGETGQVGSPKRREIGHGRLAKRALMAVLPDTNEFPYVLRIVSEITESNGSSSMATVCGTSLALMDAGVPLKAPVAGVAMGLIKEGDRYAVLTDILGDEDHLGDMDFKVAGTEKGITALQMDIKISGITNEIMERALEQALEGRTHILGVMNNALAEHRTELSQHAPRITTMKVAEDKIRTIIGKGGATIKGLIESTGVSIDIDDSGVIQLFSPDKMALEEAQKQIKALIAEIEVGQTYQGKVSKIVDFGAFINLLPGKDGLLHISQICAERTQKVEEVLQEGQEIEVFVAGIDKQGRVKLEWKDKPQAEAKEVEGASVSATFLTMEEQSEEINSGNKISEEEE.

Mg(2+) contacts are provided by aspartate 485 and aspartate 491. The KH domain maps to 552 to 611; it reads PRITTMKVAEDKIRTIIGKGGATIKGLIESTGVSIDIDDSGVIQLFSPDKMALEEAQKQI. The region spanning 621–689 is the S1 motif domain; that stretch reads GQTYQGKVSK…KQGRVKLEWK (69 aa). Residues 710 to 729 form a disordered region; it reads TMEEQSEEINSGNKISEEEE.

The protein belongs to the polyribonucleotide nucleotidyltransferase family. As to quaternary structure, component of the RNA degradosome, which is a multiprotein complex involved in RNA processing and mRNA degradation. It depends on Mg(2+) as a cofactor.

The protein resides in the cytoplasm. It carries out the reaction RNA(n+1) + phosphate = RNA(n) + a ribonucleoside 5'-diphosphate. Its function is as follows. Involved in mRNA degradation. Catalyzes the phosphorolysis of single-stranded polyribonucleotides processively in the 3'- to 5'-direction. This chain is Polyribonucleotide nucleotidyltransferase, found in Legionella pneumophila (strain Paris).